The following is a 214-amino-acid chain: Soluble inorganic pyrophosphatase (214 aa).

Residues Lys-64, Arg-78, and Tyr-90 each coordinate substrate. The Mg(2+) site is built by Asp-100, Asp-105, and Asp-137. Tyr-174 contacts substrate.

This sequence belongs to the PPase family. It depends on Mg(2+) as a cofactor.

It is found in the cytoplasm. The enzyme catalyses diphosphate + H2O = 2 phosphate + H(+). The polypeptide is Soluble inorganic pyrophosphatase (IPP) (Oryza sativa subsp. indica (Rice)).